Consider the following 708-residue polypeptide: Kelch-like protein 11 (708 aa).

The N-terminal stretch at 1–15 (MAAAAVAAAAAAAAA) is a signal peptide. A disordered region spans residues 47 to 70 (DFGPGPGISAMEASGGDPGPEAED). The 77-residue stretch at 94-170 (CDITLCFGGA…MYTGRIRVST (77 aa)) folds into the BTB domain. Positions 205-307 (CVAIHSLAHM…KPTYLTRHVK (103 aa)) constitute a BACK domain. Kelch repeat units lie at residues 360-407 (VIMV…VTES), 408-453 (YVYV…EVKG), 455-501 (LYSI…AIED), 503-556 (FVYI…VVNS), and 610-661 (DVFI…HVRI). At S465 the chain carries Phosphoserine.

In terms of assembly, component of a cullin-RING-based BCR (BTB-CUL3-RBX1) E3 ubiquitin-protein ligase complex. Homodimer. Interacts with CUL3.

Its function is as follows. Component of a cullin-RING-based BCR (BTB-CUL3-RBX1) E3 ubiquitin-protein ligase complex that mediates the ubiquitination of target proteins, leading most often to their proteasomal degradation. This is Kelch-like protein 11 (KLHL11) from Homo sapiens (Human).